The chain runs to 90 residues: Bombyxin B-12 (90 aa).

An N-terminal signal peptide occupies residues 1 to 20 (MMKTTIMFMLVVVISLTYSS). 3 disulfides stabilise this stretch: C30/C76, C42/C89, and C75/C80. Residues 49-67 (SGAQYAPYFWTRQYLGSRG) constitute a propeptide, c peptide like.

Belongs to the insulin family. As to quaternary structure, heterodimer of a B chain and an A chain linked by two disulfide bonds.

The protein localises to the secreted. Its function is as follows. Brain peptide responsible for activation of prothoracic glands to produce ecdysone in insects. This chain is Bombyxin B-12 (BBXB12), found in Bombyx mori (Silk moth).